The following is a 125-amino-acid chain: Holo-[acyl-carrier-protein] synthase (125 aa).

The Mg(2+) site is built by Asp8 and Glu57.

Belongs to the P-Pant transferase superfamily. AcpS family. Requires Mg(2+) as cofactor.

It localises to the cytoplasm. The enzyme catalyses apo-[ACP] + CoA = holo-[ACP] + adenosine 3',5'-bisphosphate + H(+). Functionally, transfers the 4'-phosphopantetheine moiety from coenzyme A to a Ser of acyl-carrier-protein. The polypeptide is Holo-[acyl-carrier-protein] synthase (Laribacter hongkongensis (strain HLHK9)).